Here is a 76-residue protein sequence, read N- to C-terminus: LSILAFVDMVARPSMGLAANTKWIRPRIQYFFAASVVANGVCHLLAPLSTSYIGFCVYAGVFGFAFGWLSSVLFET.

3 consecutive transmembrane segments (helical) span residues 1-18 (LSILAFVDMVARPSMGLA), 28-48 (IQYFFAASVVANGVCHLLAPL), and 53-73 (IGFCVYAGVFGFAFGWLSSVL). Aspartate 8 provides a ligand contact to H(+). Arginine 12 contributes to the (S)-lactate binding site.

The protein belongs to the major facilitator superfamily. Monocarboxylate porter (TC 2.A.1.13) family. Interacts with BSG; interaction mediates SLC16A1 targeting to the plasma membrane. Interacts with EMB; interaction mediates SLC16A1 targeting to the plasma membrane.

Its subcellular location is the cell membrane. The protein resides in the basolateral cell membrane. It localises to the apical cell membrane. The catalysed reaction is (S)-lactate(in) + H(+)(in) = (S)-lactate(out) + H(+)(out). It catalyses the reaction acetate(out) + H(+)(out) = acetate(in) + H(+)(in). It carries out the reaction acetoacetate(out) + H(+)(out) = acetoacetate(in) + H(+)(in). The enzyme catalyses pyruvate(out) + H(+)(out) = pyruvate(in) + H(+)(in). The catalysed reaction is (R)-3-hydroxybutanoate(out) + H(+)(out) = (R)-3-hydroxybutanoate(in) + H(+)(in). It catalyses the reaction 3-methyl-2-oxobutanoate(out) + H(+)(out) = 3-methyl-2-oxobutanoate(in) + H(+)(in). It carries out the reaction 4-methyl-2-oxopentanoate(out) + H(+)(out) = 4-methyl-2-oxopentanoate(in) + H(+)(in). The enzyme catalyses succinate(in) + 2 H(+)(in) = succinate(out) + 2 H(+)(out). In terms of biological role, bidirectional proton-coupled monocarboxylate transporter. Catalyzes the rapid transport across the plasma membrane of many monocarboxylates such as lactate, pyruvate, acetate and the ketone bodies acetoacetate and beta-hydroxybutyrate, and thus contributes to the maintenance of intracellular pH. The transport direction is determined by the proton motive force and the concentration gradient of the substrate monocarboxylate. MCT1 is a major lactate exporter. Plays a role in cellular responses to a high-fat diet by modulating the cellular levels of lactate and pyruvate that contribute to the regulation of central metabolic pathways and insulin secretion, with concomitant effects on plasma insulin levels and blood glucose homeostasis. Facilitates the protonated monocarboxylate form of succinate export, that its transient protonation upon muscle cell acidification in exercising muscle and ischemic heart. Functions via alternate outward- and inward-open conformation states. Protonation and deprotonation is essential for the conformational transition. The protein is Monocarboxylate transporter 1 (SLC16A1) of Meriones unguiculatus (Mongolian jird).